The sequence spans 955 residues: MHPSTVRREAERVKVSVRVRPLNERENNAPEGTKVTVAAKQAAAVVTVKVLGGSNNSGAAESMGTARRVAQDFQFDHVFWSVETPDACGATPATQADVFRTIGYPLVQHAFDGFNSCLFAYGQTGSGKTYTMMGADVSALSGEGNGVTPRICLEIFARKASVEAQGHSRWIVELGYVEVYNERVSDLLGKRKKGVKGGGEEVYVDVREHPSRGVFLEGQRLVEVGSLDDVVRLIEIGNGVRHTASTKMNDRSSRSHAIIMLLLREERTMTTKSGETIRTAGKSSRMNLVDLAGSERVAQSQVEGQQFKEATHINLSLTTLGRVIDVLADMATKGAKAQYSVAPFRDSKLTFILKDSLGGNSKTFMIATVSPSALNYEETLSTLRYASRARDIVNVAQVNEDPRARRIRELEEQMEDMRQAMAGGDPAYVSELKKKLALLESEAQKRAADLQALEREREHNQVQERLLRATEAEKSELESRAAALQEEMTATRRQADKMQALNLRLKEEQARKERELLKEMAKKDAALSKVRRRKDAEIASEREKLESTVAQLEREQREREVALDALQTHQRKLQEALESSERTAAERDQLLQQLTELQSERTQLSQVVTDRERLTRDLQRIQYEYGETELARDVALCAAQEMEARYHAAVFHLQTLLELATEWEDALRERALAERDEAAAAELDAAASTSQNARESACERLTSLEQQLRESEERAAELASQLEATAAAKSSAEQDRENTRATLEQQLRESEARAAELASQLEATAAAKMSAEQDRENTRATLEQQLRDSEERAAELASQLESTTAAKMSAEQDRESTRATLEQQLRDSEERAAELASQLESTTAAKMSAEQDRESTRATLEQQLRESEERAAELASQLESTTAAKMSAEQDRESTRATLEQQLRDSEERAAELASQLEATAAAKSSAEQDRENTRAALEQQLRDSEERAAELASQ.

The Kinesin motor domain maps to 12–392 (RVKVSVRVRP…LRYASRARDI (381 aa)). ATP is bound at residue 122 to 129 (GQTGSGKT). Residues 426-955 (PAYVSELKKK…EERAAELASQ (530 aa)) are a coiled coil. Disordered regions lie at residues 682–712 (ELDA…RESE) and 725–955 (TAAA…LASQ). 7 repeat units span residues 704–742 (LEQQ…TRAT), 743–781 (LEQQ…TRAT), 782–820 (LEQQ…TRAT), 821–859 (LEQQ…TRAT), 860–898 (LEQQ…TRAT), 899–937 (LEQQ…TRAA), and 938–955 (LEQQ…LASQ). Residues 704–955 (LEQQLRESEE…EERAAELASQ (252 aa)) form a 7 X 39 AA approximate tandem repeats region. Composition is skewed to basic and acidic residues over residues 785–794 (QLRDSEERAA), 824–833 (QLRDSEERAA), 863–872 (QLRESEERAA), 902–911 (QLRDSEERAA), and 941–955 (QLRD…LASQ).

It belongs to the TRAFAC class myosin-kinesin ATPase superfamily. Kinesin family.

It localises to the cytoplasm. The protein resides in the cytoskeleton. The sequence is that of Kinesin-like protein K39 (KIN) from Leishmania chagasi.